The sequence spans 164 residues: uncharacterized protein (164 aa).

Positions 1–77 (MGQKKTMGTE…PCSIRDAPFH (77 aa)) are disordered.

This is an uncharacterized protein from Homo sapiens (Human).